The primary structure comprises 452 residues: Down-regulator of invasive growth 1 (452 aa).

2 disordered regions span residues 1–145 (MAVS…SAPA) and 262–311 (RNKR…ADLR). Polar residues-rich tracts occupy residues 12–22 (EDTSIAKSTQD) and 35–53 (KGSSDSNIKNSPGGNSVGQ). S45 bears the Phosphoserine mark. The span at 61-77 (PEEDDSGDKEADHEDSE) shows a compositional bias: acidic residues. A compositionally biased stretch (basic residues) spans 81–100 (AKKRKAQPLKNPKKSLKRGR). 4 stretches are compositionally biased toward polar residues: residues 107–116 (LSDSNTNTHG), 124–145 (LASSNSAHFPPVANQNVKSAPA), 269–281 (SYDSPLSGTASTG), and 291–307 (RNSSVGSSANAGPTQQR). Residues S126, S142, S272, and S275 each carry the phosphoserine modification. Residues 212 to 452 (IPPPHMLNKP…KSSSHHRTGK (241 aa)) are interaction with FUS3 and KSS1. Position 330 is a phosphoserine (S330). Residues 331 to 348 (ANTKARSASTSTSTSTST) are compositionally biased toward low complexity. The tract at residues 331 to 395 (ANTKARSAST…QRTSQPQQQS (65 aa)) is disordered. Residues 349–361 (NRDRSSWHEAEPN) are compositionally biased toward basic and acidic residues. Acidic residues predominate over residues 362–372 (KDEEEGTDLAI). A compositionally biased stretch (low complexity) spans 378 to 395 (PTPTFTTFQRTSQPQQQS). T379 bears the Phosphothreonine mark. 2 positions are modified to phosphoserine: S395 and S428.

In terms of assembly, forms a complex with DIG2, STE12 and either FUS3 or KSS1. The interaction of FUS3 with STE12 depends on the presence of both DIG1 and DIG2. STE12 is lost from FUS3/DIG1/DIG2 complex after pheromone treatment. DIG1 and DIG2 have also been reported to interact with CLN1 and CLN2. In terms of processing, phosphorylated by FUS3 and KSS1, in a pheromone-stimulated manner. Phosphorylation reduces the affinity for STE12.

The protein localises to the nucleus. Functionally, DIG1 and DIG2 are negative regulators of the filamentation and pheromone induced mating program. DIG1 and DIG2 inhibit the transcriptional activity of STE12 by direct protein-protein interaction. DIG1 colocalizes to promoters with STE12 and redistributes with it during induction of filamentation (by butanol) or mating (by pheromone) to program specific genes, but binding of DIG1 to STE12 is reduced by pheromone treatment. This chain is Down-regulator of invasive growth 1 (DIG1), found in Saccharomyces cerevisiae (strain ATCC 204508 / S288c) (Baker's yeast).